A 263-amino-acid chain; its full sequence is Adaptin ear-binding coat-associated protein 2 (263 aa).

2 disordered regions span residues 166 to 194 (KKKE…PPGG) and 219 to 263 (APSS…WVQF). S181 bears the Phosphoserine mark. 2 short sequence motifs (WXXF motif) span residues 240–243 (WGDF) and 260–263 (WVQF). Positions 246 to 263 (STGSTSSQTQPGTGWVQF) are enriched in low complexity.

Belongs to the NECAP family. In terms of assembly, interacts with AP1G1 and AP2A1 components of the adapter protein complexes AP-1 and AP-2. Interacts with the GAE domain proteins GGA1, GGA2 and GGA3.

The protein localises to the cytoplasmic vesicle. It is found in the clathrin-coated vesicle membrane. The protein resides in the cell membrane. Functionally, involved in endocytosis. This Homo sapiens (Human) protein is Adaptin ear-binding coat-associated protein 2 (NECAP2).